Reading from the N-terminus, the 395-residue chain is Small RNA 2'-O-methyltransferase (395 aa).

Positions 79 and 115 each coordinate S-adenosyl-L-methionine. 4 residues coordinate Mg(2+): Glu-133, Glu-136, His-137, and His-182.

This sequence belongs to the methyltransferase superfamily. HEN1 family. Requires Mg(2+) as cofactor. Specifically expressed in testis.

Its subcellular location is the cytoplasm. The enzyme catalyses small RNA 3'-end nucleotide + S-adenosyl-L-methionine = small RNA 3'-end 2'-O-methylnucleotide + S-adenosyl-L-homocysteine + H(+). In terms of biological role, methyltransferase that adds a 2'-O-methyl group at the 3'-end of piRNAs, a class of 24 to 30 nucleotide RNAs that are generated by a Dicer-independent mechanism and are primarily derived from transposons and other repeated sequence elements. This probably protects the 3'-end of piRNAs from uridylation activity and subsequent degradation. Stabilization of piRNAs is essential for gametogenesis. The polypeptide is Small RNA 2'-O-methyltransferase (Henmt1) (Mus musculus (Mouse)).